The sequence spans 44 residues: uncharacterized protein (44 aa).

The N-terminal stretch at 1–28 is a signal peptide; the sequence is MLRDLGRRVAIAAILSGIILGGMSISLA.

This is an uncharacterized protein from Bacillus subtilis (strain 168).